Reading from the N-terminus, the 163-residue chain is Probable chemoreceptor glutamine deamidase CheD (163 aa).

It belongs to the CheD family.

The enzyme catalyses L-glutaminyl-[protein] + H2O = L-glutamyl-[protein] + NH4(+). Its function is as follows. Probably deamidates glutamine residues to glutamate on methyl-accepting chemotaxis receptors (MCPs), playing an important role in chemotaxis. In Borrelia turicatae (strain 91E135), this protein is Probable chemoreceptor glutamine deamidase CheD.